The following is a 399-amino-acid chain: Elongation factor Tu (399 aa).

Residues 10 to 207 (KTHMNVGTIG…AVDSYFPDPV (198 aa)) enclose the tr-type G domain. A G1 region spans residues 19–26 (GHIDHGKT). Residue 19-26 (GHIDHGKT) participates in GTP binding. Thr26 provides a ligand contact to Mg(2+). The G2 stretch occupies residues 60–64 (GITIN). A G3 region spans residues 81 to 84 (DCPG). Residues 81-85 (DCPGH) and 136-139 (NKVD) each bind GTP. A G4 region spans residues 136 to 139 (NKVD). The interval 174 to 176 (SAL) is G5.

This sequence belongs to the TRAFAC class translation factor GTPase superfamily. Classic translation factor GTPase family. EF-Tu/EF-1A subfamily. In terms of assembly, monomer.

The protein localises to the cytoplasm. It catalyses the reaction GTP + H2O = GDP + phosphate + H(+). GTP hydrolase that promotes the GTP-dependent binding of aminoacyl-tRNA to the A-site of ribosomes during protein biosynthesis. The polypeptide is Elongation factor Tu (Petrotoga mobilis (strain DSM 10674 / SJ95)).